We begin with the raw amino-acid sequence, 58 residues long: uncharacterized protein (58 aa).

Belongs to the ycf18/nblA family.

The protein localises to the plastid. It is found in the chloroplast. This is an uncharacterized protein from Porphyra purpurea (Red seaweed).